Here is a 122-residue protein sequence, read N- to C-terminus: MGREMKKTGTPRPFRIEDPNQQPTWHDQPEMGSHYFAQAGLELLGSSNPPASASQSAGITGVSHCARPGEHDLNHTVFQVKDSTFLRHLESDRPEFKSCLPPHFTEPSVSLSTSEGCEDAMG.

Disordered stretches follow at residues 1–30 and 96–122; these read MGRE…DQPE and FKSC…DAMG.

This is an uncharacterized protein from Homo sapiens (Human).